The sequence spans 104 residues: MSNRVSTGKMAMAPQESVQPAVLYKLVLFALLMAVVPIGTYFSTLNYLWDGASRCGFPSGLCSTTFAAISAIAAANLILVGYVVVAFREDAASRTGPLPEKKTS.

At 1-21 (MSNRVSTGKMAMAPQESVQPA) the chain is on the cytoplasmic side. Residues 22-42 (VLYKLVLFALLMAVVPIGTYF) traverse the membrane as a helical segment. The Lumenal segment spans residues 43–65 (STLNYLWDGASRCGFPSGLCSTT). Residues 66-86 (FAAISAIAAANLILVGYVVVA) form a helical membrane-spanning segment. At 87–104 (FREDAASRTGPLPEKKTS) the chain is on the cytoplasmic side. The short motif at 101–104 (KKTS) is the Prevents secretion from ER element.

It belongs to the VMA21 family.

It localises to the endoplasmic reticulum membrane. The protein localises to the endoplasmic reticulum-Golgi intermediate compartment membrane. The protein resides in the cytoplasmic vesicle. Its subcellular location is the COPII-coated vesicle membrane. Its function is as follows. Required for the assembly of the V0 complex of the vacuolar ATPase (V-ATPase) in the endoplasmic reticulum. The polypeptide is Vacuolar ATPase assembly integral membrane protein VMA21 (Cryptococcus neoformans var. neoformans serotype D (strain B-3501A) (Filobasidiella neoformans)).